Reading from the N-terminus, the 353-residue chain is Protein disulfide isomerase CRELD2 (353 aa).

The N-terminal stretch at 1–24 (MRLPRRAALGLLPLLLLLPPAPEA) is a signal peptide. The CXXC motif lies at 31–34 (CHRC). Disulfide bonds link Cys31–Cys34, Cys140–Cys154, Cys148–Cys166, and Cys168–Cys177. Residues 136–178 (DCLACQGGSQRPCSGNGHCSGDGSRQGDGSCRCHMGYQGPLCT) enclose the EGF-like 1 domain. Residues 193–240 (HSICTACDESCKTCSGLTNRDCGECEVGWVLDEGACVDVDECAAEPPP) form an FU 1 repeat. Asn251 carries an N-linked (GlcNAc...) asparagine glycan. Residues 253–302 (SYTCEECDSSCVGCTGEGPGNCKECISGYAREHGQCADVDECSLAEKTCV) form an FU 2 repeat. The CXXC signature appears at 263 to 266 (CVGC). Cystine bridges form between Cys263–Cys266, Cys294–Cys308, Cys301–Cys317, and Cys319–Cys330. The 42-residue stretch at 290–331 (DVDECSLAEKTCVRKNENCYNTPGSYVCVCPDGFEETEDACV) folds into the EGF-like 2; calcium-binding domain. The disordered stretch occupies residues 332 to 353 (PPAEAEATEGESPTQLPSREDL). Positions 342–353 (ESPTQLPSREDL) are enriched in polar residues.

It belongs to the CRELD family. As to quaternary structure, interacts with CHRNA4. Component of a complex containing at least CRELD2, MANF, MATN3 and PDIA4. As to expression, ubiquitously expressed. Highly expressed in skeletal muscle, heart, liver, kidney and placenta.

Its subcellular location is the endoplasmic reticulum. It catalyses the reaction Catalyzes the rearrangement of -S-S- bonds in proteins.. Protein disulfide isomerase. Might play a role in the unfolded protein response. May regulate transport of alpha4-beta2 neuronal acetylcholine receptor. This chain is Protein disulfide isomerase CRELD2 (CRELD2), found in Homo sapiens (Human).